The sequence spans 136 residues: Small ribosomal subunit protein uS19 (136 aa).

A disordered region spans residues 114 to 136 (RSRVSHGSAGVGATRSSKFVPLK).

The protein belongs to the universal ribosomal protein uS19 family.

Functionally, protein S19 forms a complex with S13 that binds strongly to the 16S ribosomal RNA. The protein is Small ribosomal subunit protein uS19 of Methanosarcina acetivorans (strain ATCC 35395 / DSM 2834 / JCM 12185 / C2A).